Here is a 660-residue protein sequence, read N- to C-terminus: Polycomb protein SCMH1 (660 aa).

2 MBT repeats span residues 28 to 126 and 134 to 235; these read FTWD…LQPP and SSWP…LQPP. A disordered region spans residues 233 to 345; sequence QPPGTKVVIP…EPDTSTVPQD (113 aa). Basic residues-rich tracts occupy residues 273 to 284 and 305 to 320; these read RGRKPGKKRGRT and FPKKRGPKPGSKRKPR. Over residues 330-343 the composition is skewed to low complexity; it reads PTTSTPEPDTSTVP. The SAM domain occupies 593-658; the sequence is WTVEDVMQFV…SYHIDRLKQG (66 aa).

It belongs to the SCM family. As to quaternary structure, interacts with the SAM domain of PHC1 via its SAM domain in vitro. Associates with a PRC1-like complex. As to expression, strongly expressed in heart, muscle and pancreas. Weakly expressed in brain, placenta, lung, liver and kidney.

The protein resides in the nucleus. Its function is as follows. Associates with Polycomb group (PcG) multiprotein complexes; the complex class is required to maintain the transcriptionally repressive state of some genes. This Homo sapiens (Human) protein is Polycomb protein SCMH1.